The following is a 152-amino-acid chain: Large ribosomal subunit protein bL21 (152 aa).

The segment at 115–152 (VTSISNGEKPKKATTSAKPNTKKPSTAVKSSKVEKTPE) is disordered. Residues 127 to 143 (ATTSAKPNTKKPSTAVK) are compositionally biased toward polar residues.

This sequence belongs to the bacterial ribosomal protein bL21 family. As to quaternary structure, part of the 50S ribosomal subunit. Contacts protein L20.

Its function is as follows. This protein binds to 23S rRNA in the presence of protein L20. This is Large ribosomal subunit protein bL21 from Prochlorococcus marinus (strain SARG / CCMP1375 / SS120).